The following is a 164-amino-acid chain: R-phycoerythrin alpha chain (164 aa).

(2R,3E)-phycoerythrobilin-binding residues include cysteine 82 and cysteine 139.

Belongs to the phycobiliprotein family. As to quaternary structure, heterodimer of an alpha and a beta chain. Contains two covalently linked bilin chromophores.

It is found in the plastid. The protein localises to the chloroplast thylakoid membrane. Light-harvesting photosynthetic bile pigment-protein from the phycobiliprotein complex. The sequence is that of R-phycoerythrin alpha chain (cpeA) from Porphyra purpurea (Red seaweed).